We begin with the raw amino-acid sequence, 368 residues long: Zinc finger protein 24 (368 aa).

Residue K22 forms a Glycyl lysine isopeptide (Lys-Gly) (interchain with G-Cter in SUMO2) linkage. Residue K27 forms a Glycyl lysine isopeptide (Lys-Gly) (interchain with G-Cter in SUMO1); alternate linkage. K27 participates in a covalent cross-link: Glycyl lysine isopeptide (Lys-Gly) (interchain with G-Cter in SUMO2); alternate. The 83-residue stretch at 52–134 folds into the SCAN box domain; sequence RQRFRQFGYQ…TVLEDLESEL (83 aa). 2 positions are modified to phosphoserine: S132 and S142. Residues K147, K177, and K236 each participate in a glycyl lysine isopeptide (Lys-Gly) (interchain with G-Cter in SUMO2) cross-link. Residues 251–273 form a C2H2-type 1 zinc finger; sequence HICDECGKHFSQGSALILHQRIH. The tract at residues 251–301 is necessary and sufficient for nuclear localization; sequence HICDECGKHFSQGSALILHQRIHSGEKPYGCVECGKAFSRSSILVQHQRVH. S274 is modified (phosphoserine). Glycyl lysine isopeptide (Lys-Gly) (interchain with G-Cter in SUMO2) cross-links involve residues K277 and K286. C2H2-type zinc fingers lie at residues 279-301, 307-329, and 335-357; these read YGCV…QRVH, YKCL…QRIH, and YECV…XXRH. S292 carries the post-translational modification Phosphoserine. Phosphotyrosine is present on Y335. Residues K361 and K367 each participate in a glycyl lysine isopeptide (Lys-Gly) (interchain with G-Cter in SUMO2) cross-link.

It belongs to the krueppel C2H2-type zinc-finger protein family. Sumoylated.

It is found in the nucleus. Functionally, transcription factor required for myelination of differentiated oligodendrocytes. Required for the conversion of oligodendrocytes from the premyelinating to the myelinating state. In the developing central nervous system (CNS), involved in the maintenance in the progenitor stage by promoting the cell cycle. Specifically binds to the 5'-TCAT-3' DNA sequence. Has transcription repressor activity in vitro. This is Zinc finger protein 24 (ZNF24) from Pan troglodytes (Chimpanzee).